A 447-amino-acid polypeptide reads, in one-letter code: ATP-dependent protease ATPase subunit HslU (447 aa).

ATP contacts are provided by residues isoleucine 17 and 59-64 (GVGKTE). A disordered region spans residues 136–160 (PPARGGFQGEPTAEEKPTEKKESAT). The span at 148-159 (AEEKPTEKKESA) shows a compositional bias: basic and acidic residues. Residues aspartate 260, glutamate 325, and arginine 397 each coordinate ATP.

The protein belongs to the ClpX chaperone family. HslU subfamily. As to quaternary structure, a double ring-shaped homohexamer of HslV is capped on each side by a ring-shaped HslU homohexamer. The assembly of the HslU/HslV complex is dependent on binding of ATP.

It is found in the cytoplasm. Functionally, ATPase subunit of a proteasome-like degradation complex; this subunit has chaperone activity. The binding of ATP and its subsequent hydrolysis by HslU are essential for unfolding of protein substrates subsequently hydrolyzed by HslV. HslU recognizes the N-terminal part of its protein substrates and unfolds these before they are guided to HslV for hydrolysis. The polypeptide is ATP-dependent protease ATPase subunit HslU (Coxiella burnetii (strain RSA 331 / Henzerling II)).